Consider the following 405-residue polypeptide: Prostaglandin E2 receptor EP1 subtype (405 aa).

Over 1–39 (MSPCGLNLSLADEAATCATPRLPNTSVVLPTGDNGTSPA) the chain is Extracellular. Residues Asn7, Asn24, and Asn34 are each glycosylated (N-linked (GlcNAc...) asparagine). The helical transmembrane segment at 40 to 62 (LPIFSMTLGAVSNVLALALLAQV) threads the bilayer. At 63 to 80 (AGRMRRRRSAATFLLFVA) the chain is on the cytoplasmic side. Residues 81-99 (SLLAIDLAGHVIPGALVLR) traverse the membrane as a helical segment. The Extracellular portion of the chain corresponds to 100-113 (LYTAGRAPAGGACH). Cysteines 112 and 190 form a disulfide. The chain crosses the membrane as a helical span at residues 114 to 135 (FLGGCMVFFGLCPLLLGCGMAV). Over 136 to 157 (ERCVGVTQPLIHAARVSVARAR) the chain is Cytoplasmic. Residues 158-179 (LALAVLAAMALAVALLPLVHVG) traverse the membrane as a helical segment. Residues 180-202 (RYELQYPGTWCFISLGPRGGWRQ) are Extracellular-facing. Residues 203–228 (ALLAGLFAGLGLAALLAALVCNTLSG) traverse the membrane as a helical segment. Residues 229 to 301 (LALLRARWRR…HAHDVEMVGQ (73 aa)) are Cytoplasmic-facing. The disordered stretch occupies residues 243 to 287 (RFRKTAGPDDRRRWGSRGPRLASASSASSITSATATLRSSRGGGS). A compositionally biased stretch (low complexity) spans 262–282 (RLASASSASSITSATATLRSS). Residues 302–323 (LVGIMVVSCICWSPLLVLVVLA) form a helical membrane-spanning segment. Over 324 to 337 (IGGWNSNSLQRPLF) the chain is Extracellular. The chain crosses the membrane as a helical span at residues 338-357 (LAVRLASWNQILDPWVYILL). The Cytoplasmic portion of the chain corresponds to 358-405 (RQAMLRQLLRLLPLRVSAKGGPTELGLTKSAWEASSLRSSRHSGFSHL).

The protein belongs to the G-protein coupled receptor 1 family. In terms of processing, phosphorylated. In terms of tissue distribution, abundant in kidney and in a lesser amount in lung.

The protein resides in the cell membrane. In terms of biological role, receptor for prostaglandin E2 (PGE2). The activity of this receptor is mediated by G(q) proteins which activate a phosphatidylinositol-calcium second messenger system. May play a role as an important modulator of renal function. Implicated the smooth muscle contractile response to PGE2 in various tissues. This chain is Prostaglandin E2 receptor EP1 subtype (Ptger1), found in Mus musculus (Mouse).